Here is a 177-residue protein sequence, read N- to C-terminus: O-acetyl-ADP-ribose deacetylase (177 aa).

The 175-residue stretch at 1–175 (MKSRIHVQHG…LYERLLTQQG (175 aa)) folds into the Macro domain. Residues 11-12 (DI), Asn25, 33-35 (GVD), and 122-126 (STGAY) contribute to the substrate site. Asp35 (proton acceptor) is an active-site residue.

It belongs to the MacroD-type family. YmdB subfamily. In terms of assembly, homodimer. Interacts with RNase III.

The enzyme catalyses 3''-O-acetyl-ADP-D-ribose + H2O = ADP-D-ribose + acetate + H(+). It catalyses the reaction 2''-O-acetyl-ADP-D-ribose + H2O = ADP-D-ribose + acetate + H(+). Deacetylates O-acetyl-ADP ribose to yield ADP-ribose and free acetate. Down-regulates ribonuclease 3 (RNase III) activity. Acts by interacting directly with the region of the ribonuclease that is required for dimerization/activation. This is O-acetyl-ADP-ribose deacetylase from Citrobacter koseri (strain ATCC BAA-895 / CDC 4225-83 / SGSC4696).